Here is a 265-residue protein sequence, read N- to C-terminus: Protein N-terminal and lysine N-methyltransferase EFM7 (265 aa).

S-adenosyl-L-methionine is bound by residues Trp-55, 81 to 83 (GAA), Asp-103, Trp-141, and Ala-169.

Belongs to the class I-like SAM-binding methyltransferase superfamily. EFM7 family.

Its subcellular location is the cytoplasm. Functionally, S-adenosyl-L-methionine-dependent protein methyltransferase that trimethylates the N-terminal glycine 'Gly-2' of elongation factor 1-alpha, before also catalyzing the mono- and dimethylation of 'Lys-3'. This chain is Protein N-terminal and lysine N-methyltransferase EFM7, found in Gibberella zeae (strain ATCC MYA-4620 / CBS 123657 / FGSC 9075 / NRRL 31084 / PH-1) (Wheat head blight fungus).